Reading from the N-terminus, the 520-residue chain is Cytosol aminopeptidase (520 aa).

Positions 286 and 291 each coordinate Zn(2+). Lysine 298 is a catalytic residue. Aspartate 309, aspartate 368, and glutamate 370 together coordinate Zn(2+). Arginine 372 is a catalytic residue.

It belongs to the peptidase M17 family. In terms of assembly, homohexamer. Zn(2+) is required as a cofactor.

The protein resides in the cytoplasm. The enzyme catalyses Release of an N-terminal amino acid, Xaa-|-Yaa-, in which Xaa is preferably Leu, but may be other amino acids including Pro although not Arg or Lys, and Yaa may be Pro. Amino acid amides and methyl esters are also readily hydrolyzed, but rates on arylamides are exceedingly low.. The catalysed reaction is Release of N-terminal proline from a peptide.. Presumably involved in the processing and regular turnover of intracellular proteins. Catalyzes the removal of unsubstituted N-terminal amino acids from various peptides. This Dictyostelium discoideum (Social amoeba) protein is Cytosol aminopeptidase (lap).